The sequence spans 513 residues: Membrane protein (513 aa).

4 consecutive repeat copies span residues 9-11 (PSA), 12-14 (PSA), 15-17 (PSA), and 18-20 (PSA). The interval 9 to 20 (PSAPSAPSAPSA) is 4 X 3 AA tandem repeats of P-S-A. 14 helical membrane-spanning segments follow: residues 32 to 52 (LTLHWGLFAAVAALLVVLAIP), 56 to 76 (GLTVAGQRMLAILAFAIVVWI), 79 to 99 (AVSYETSAIMITSLMAGLIGF), 126 to 146 (TALALVAAALFISAAMTVTGL), 165 to 185 (ILIGTIAVTIALSLVVPSATA), 208 to 228 (NIAAGIMITVAQATSIWNVGI), 254 to 274 (QWLIAGAPWAIAMSVVLYFLV), 309 to 329 (LAAVSLGLLLFWATEGKLHSF), 332 to 352 (ATVTFVGLVILMMPRIGVMDW), 360 to 380 (PWGTLIVFGVGISLGTALLST), 400 to 420 (GALLVFAILSAFLILIHLGFA), 422 to 442 (ATALTAALLPILIAVLQTLPG), 447 to 467 (VGMTMLLGFTVSFGFILPINA), and 487 to 507 (IGIPVTIIGYAMMLLFAATYW).

The protein belongs to the SLC13A/DASS transporter (TC 2.A.47) family. DIT1 subfamily.

It is found in the cell membrane. The protein is Membrane protein of Cupriavidus necator (strain ATCC 17699 / DSM 428 / KCTC 22496 / NCIMB 10442 / H16 / Stanier 337) (Ralstonia eutropha).